Here is a 293-residue protein sequence, read N- to C-terminus: Nucleotide-binding protein Bcer98_3698 (293 aa).

Glycine 14–threonine 21 is an ATP binding site. GTP is bound at residue aspartate 65–glycine 68.

This sequence belongs to the RapZ-like family.

Functionally, displays ATPase and GTPase activities. This Bacillus cytotoxicus (strain DSM 22905 / CIP 110041 / 391-98 / NVH 391-98) protein is Nucleotide-binding protein Bcer98_3698.